Reading from the N-terminus, the 120-residue chain is NAD(P)H-quinone oxidoreductase subunit 3 (120 aa).

Helical transmembrane passes span 10–30 (FLGF…TNLI), 64–84 (MFAL…PWAV), and 89–109 (LGLL…IALA).

This sequence belongs to the complex I subunit 3 family. As to quaternary structure, NDH-1 can be composed of about 15 different subunits; different subcomplexes with different compositions have been identified which probably have different functions.

The protein localises to the cellular thylakoid membrane. The enzyme catalyses a plastoquinone + NADH + (n+1) H(+)(in) = a plastoquinol + NAD(+) + n H(+)(out). It carries out the reaction a plastoquinone + NADPH + (n+1) H(+)(in) = a plastoquinol + NADP(+) + n H(+)(out). In terms of biological role, NDH-1 shuttles electrons from an unknown electron donor, via FMN and iron-sulfur (Fe-S) centers, to quinones in the respiratory and/or the photosynthetic chain. The immediate electron acceptor for the enzyme in this species is believed to be plastoquinone. Couples the redox reaction to proton translocation, and thus conserves the redox energy in a proton gradient. Cyanobacterial NDH-1 also plays a role in inorganic carbon-concentration. The polypeptide is NAD(P)H-quinone oxidoreductase subunit 3 (Prochlorococcus marinus (strain MIT 9515)).